A 143-amino-acid chain; its full sequence is Large ribosomal subunit protein uL16 (143 aa).

The span at 1–17 shows a compositional bias: basic residues; sequence MLQPKRTKFRKAHKGRI. The disordered stretch occupies residues 1-21; sequence MLQPKRTKFRKAHKGRIHGNA.

The protein belongs to the universal ribosomal protein uL16 family. As to quaternary structure, part of the 50S ribosomal subunit.

Binds 23S rRNA and is also seen to make contacts with the A and possibly P site tRNAs. In Rhizorhabdus wittichii (strain DSM 6014 / CCUG 31198 / JCM 15750 / NBRC 105917 / EY 4224 / RW1) (Sphingomonas wittichii), this protein is Large ribosomal subunit protein uL16.